A 188-amino-acid chain; its full sequence is ATP synthase subunit b 1 (188 aa).

Residues 7–27 (LSVLALAMLAANPAFAAGGGI) form a helical membrane-spanning segment.

This sequence belongs to the ATPase B chain family. In terms of assembly, F-type ATPases have 2 components, F(1) - the catalytic core - and F(0) - the membrane proton channel. F(1) has five subunits: alpha(3), beta(3), gamma(1), delta(1), epsilon(1). F(0) has three main subunits: a(1), b(2) and c(10-14). The alpha and beta chains form an alternating ring which encloses part of the gamma chain. F(1) is attached to F(0) by a central stalk formed by the gamma and epsilon chains, while a peripheral stalk is formed by the delta and b chains.

It localises to the cell inner membrane. Functionally, f(1)F(0) ATP synthase produces ATP from ADP in the presence of a proton or sodium gradient. F-type ATPases consist of two structural domains, F(1) containing the extramembraneous catalytic core and F(0) containing the membrane proton channel, linked together by a central stalk and a peripheral stalk. During catalysis, ATP synthesis in the catalytic domain of F(1) is coupled via a rotary mechanism of the central stalk subunits to proton translocation. Component of the F(0) channel, it forms part of the peripheral stalk, linking F(1) to F(0). In Roseobacter denitrificans (strain ATCC 33942 / OCh 114) (Erythrobacter sp. (strain OCh 114)), this protein is ATP synthase subunit b 1.